We begin with the raw amino-acid sequence, 130 residues long: Small ribosomal subunit protein uS9 (130 aa).

This sequence belongs to the universal ribosomal protein uS9 family.

This is Small ribosomal subunit protein uS9 from Lawsonia intracellularis (strain PHE/MN1-00).